The primary structure comprises 62 residues: Large ribosomal subunit protein bL28 (62 aa).

A disordered region spans residues 1-23 (MGKQCYVTGRKASTGNRRSHALN).

This sequence belongs to the bacterial ribosomal protein bL28 family.

This chain is Large ribosomal subunit protein bL28, found in Staphylococcus carnosus (strain TM300).